The primary structure comprises 459 residues: Glutamate--tRNA ligase 2 (459 aa).

The short motif at 8–18 (PSPTGYLHIGG) is the 'HIGH' region element. A 'KMSKS' region motif is present at residues 237 to 241 (KLSKR). K240 is an ATP binding site.

Belongs to the class-I aminoacyl-tRNA synthetase family. Glutamate--tRNA ligase type 1 subfamily. As to quaternary structure, monomer.

It is found in the cytoplasm. The catalysed reaction is tRNA(Glu) + L-glutamate + ATP = L-glutamyl-tRNA(Glu) + AMP + diphosphate. Functionally, catalyzes the attachment of glutamate to tRNA(Glu) in a two-step reaction: glutamate is first activated by ATP to form Glu-AMP and then transferred to the acceptor end of tRNA(Glu). This is Glutamate--tRNA ligase 2 from Campylobacter curvus (strain 525.92).